We begin with the raw amino-acid sequence, 118 residues long: NADPH-dependent 7-cyano-7-deazaguanine reductase (118 aa).

Cys-34 serves as the catalytic Thioimide intermediate. The active-site Proton donor is Asp-41. Residues Val-56–Leu-58 and His-75–Glu-76 contribute to the substrate site.

The protein belongs to the GTP cyclohydrolase I family. QueF type 1 subfamily.

The protein resides in the cytoplasm. The enzyme catalyses 7-aminomethyl-7-carbaguanine + 2 NADP(+) = 7-cyano-7-deazaguanine + 2 NADPH + 3 H(+). Its pathway is tRNA modification; tRNA-queuosine biosynthesis. Catalyzes the NADPH-dependent reduction of 7-cyano-7-deazaguanine (preQ0) to 7-aminomethyl-7-deazaguanine (preQ1). The protein is NADPH-dependent 7-cyano-7-deazaguanine reductase of Halorhodospira halophila (strain DSM 244 / SL1) (Ectothiorhodospira halophila (strain DSM 244 / SL1)).